A 272-amino-acid chain; its full sequence is GPN-loop GTPase 3 (272 aa).

12 to 17 (GAGKST) contributes to the GTP binding site. Residues 69-71 (GPN) carry the Gly-Pro-Asn (GPN)-loop; involved in dimer interface motif. GTP is bound at residue 172–175 (SKMD). Positions 253-272 (QYGEDEEPKVPKDMDDGDFD) are disordered.

It belongs to the GPN-loop GTPase family. Heterodimers with GPN1 or GPN2. Binds to RNA polymerase II (RNAPII).

Small GTPase required for proper nuclear import of RNA polymerase II and III (RNAPII and RNAPIII). May act at an RNAP assembly step prior to nuclear import. This is GPN-loop GTPase 3 from Cryptococcus neoformans var. neoformans serotype D (strain JEC21 / ATCC MYA-565) (Filobasidiella neoformans).